The primary structure comprises 375 residues: 23S rRNA (uracil(747)-C(5))-methyltransferase RlmC (375 aa).

4 residues coordinate [4Fe-4S] cluster: Cys3, Cys11, Cys14, and Cys87. S-adenosyl-L-methionine-binding residues include Gln212, Phe241, Glu262, and Asn307. The active-site Nucleophile is the Cys334.

Belongs to the class I-like SAM-binding methyltransferase superfamily. RNA M5U methyltransferase family. RlmC subfamily.

It carries out the reaction uridine(747) in 23S rRNA + S-adenosyl-L-methionine = 5-methyluridine(747) in 23S rRNA + S-adenosyl-L-homocysteine + H(+). In terms of biological role, catalyzes the formation of 5-methyl-uridine at position 747 (m5U747) in 23S rRNA. This Escherichia coli (strain SMS-3-5 / SECEC) protein is 23S rRNA (uracil(747)-C(5))-methyltransferase RlmC.